The following is a 246-amino-acid chain: Ribonuclease 3 (246 aa).

The region spanning 10 to 143 is the RNase III domain; it reads LERLEQALDY…LLGAIYLDGG (134 aa). Glu-56 provides a ligand contact to Mg(2+). Asp-60 is a catalytic residue. The Mg(2+) site is built by Asn-129 and Glu-132. Glu-132 is an active-site residue. One can recognise a DRBM domain in the interval 170 to 239; it reads DYKTLLQEYL…AQQALELLIE (70 aa).

This sequence belongs to the ribonuclease III family. In terms of assembly, homodimer. Mg(2+) is required as a cofactor.

The protein resides in the cytoplasm. It catalyses the reaction Endonucleolytic cleavage to 5'-phosphomonoester.. Functionally, digests double-stranded RNA. Involved in the processing of primary rRNA transcript to yield the immediate precursors to the large and small rRNAs (23S and 16S). Processes some mRNAs, and tRNAs when they are encoded in the rRNA operon. Processes pre-crRNA and tracrRNA of type II CRISPR loci if present in the organism. The sequence is that of Ribonuclease 3 from Magnetococcus marinus (strain ATCC BAA-1437 / JCM 17883 / MC-1).